A 1671-amino-acid polypeptide reads, in one-letter code: Fatty acid synthase alpha subunit aflA (1671 aa).

The tract at residues Ile40–Thr60 is disordered. A compositionally biased stretch (pro residues) spans Glu47 to Pro58. The 79-residue stretch at Asp75–Lys153 folds into the Carrier domain. Ser113 carries the post-translational modification O-(pantetheine 4'-phosphoryl)serine. Positions Gly492–Ala729 are ketoreductase (KR) domain. The Ketosynthase family 3 (KS3) domain maps to Met926–Ala1428. The active-site For beta-ketoacyl synthase activity is the Cys1113. Residues Ser1244–Ser1270 show a composition bias toward low complexity. The interval Ser1244–Thr1288 is disordered. Active-site for beta-ketoacyl synthase activity residues include His1313 and His1354. A disordered region spans residues Pro1497 to Gly1521. A Mg(2+)-binding site is contributed by Asp1552. Acetyl-CoA-binding positions include Asp1552 to Val1554, Glu1598 to Ser1608, His1622 to Asn1625, and Ile1652 to Tyr1654. Ser1653 is a binding site for Mg(2+).

Belongs to the thiolase-like superfamily. Fungal fatty acid synthetase subunit alpha family. In terms of assembly, [Alpha(6)beta(6)] hexamers of two multifunctional subunits (alpha and beta). Post-translationally, 4'-phosphopantetheine is transferred from CoA to a specific serine of the acyl carrier domain by the C-terminal PPT domain. This modification is essential for activity because fatty acids are bound in thioester linkage to the sulfhydryl of the prosthetic group.

The enzyme catalyses acetyl-CoA + n malonyl-CoA + 2n NADPH + 4n H(+) = a long-chain-acyl-CoA + n CoA + n CO2 + 2n NADP(+).. The catalysed reaction is a fatty acyl-[ACP] + malonyl-[ACP] + H(+) = a 3-oxoacyl-[ACP] + holo-[ACP] + CO2. It carries out the reaction a (3R)-hydroxyacyl-[ACP] + NADP(+) = a 3-oxoacyl-[ACP] + NADPH + H(+). It participates in mycotoxin biosynthesis; aflatoxin biosynthesis. Fatty acid synthase alpha subunit; part of the gene cluster that mediates the biosynthesis of aflatoxins, a group of polyketide-derived furanocoumarins, and part of the most toxic and carcinogenic compounds among the known mycotoxins. The four major aflatoxins produced by A.parasiticus are aflatoxin B1 (AFB1), aflatoxin B2 (AFB2), aflatoxin G1 (AFG1) and aflatoxin G2 (AFG2). Within the aflatoxin pathway, the fungal fatty acid synthase aflA/aflB provides the hexanoyl starter unit to the acyl-carrier protein (ACP) domain of the norsolorinic acid synthase to allow the first step of the pathway. The biosynthesis of aflatoxins begins with the norsolorinic acid synthase aflC that combines a hexanoyl starter unit produced by the fatty acid synthase aflA/aflB and 7 malonyl-CoA extender units to synthesize the precursor NOR. The second step is the conversion of NOR to averantin (AVN) and requires the norsolorinic acid ketoreductase aflD, which catalyzes the dehydration of norsolorinic acid to form (1'S)-averantin. The norsolorinic acid reductases aflE and aflF may also play a role in the conversion of NOR to AVN. The cytochrome P450 monooxygenase aflG then catalyzes the hydroxylation of AVN to 5'hydroxyaverantin (HAVN). The next step is performed by the 5'-hydroxyaverantin dehydrogenase aflH that transforms HAVN to 5'-oxoaverantin (OAVN) which is further converted to averufin (AVF) by aflK that plays a dual role in the pathway, as a 5'-oxoaverantin cyclase that mediates conversion of 5'-oxoaverantin, as well as a versicolorin B synthase in a later step in the pathway. The averufin oxidase aflI catalyzes the conversion of AVF to versiconal hemiacetal acetate (VHA). VHA is then the substrate for the versiconal hemiacetal acetate esterase aflJ to yield versiconal (VAL). Versicolorin B synthase aflK then converts VAL to versicolorin B (VERB) by closing the bisfuran ring of aflatoxin which is required for DNA-binding, thus giving to aflatoxin its activity as a mutagen. Then, the activity of the versicolorin B desaturase aflL leads to versicolorin A (VERA). A branch point starts from VERB since it can also be converted to dihydrodemethylsterigmatocystin (DMDHST), probably also by aflL, VERA being a precursor for aflatoxins B1 and G1, and DMDHST for aflatoxins B2 and G2. Next, the versicolorin reductase aflM and the cytochrome P450 monooxygenase aflN are involved in conversion of VERA to demethylsterigmatocystin (DMST). AflX and aflY seem also involved in this step, through probable aflX-mediated epoxide ring-opening step following versicolorin A oxidation and aflY-mediated Baeyer-Villiger oxidation required for the formation of the xanthone ring. The methyltransferase aflO then leads to the modification of DMST to sterigmatocystin (ST), and of DMDHST to dihydrosterigmatocystin (DHST). Both ST and DHST are then substrates of the O-methyltransferase aflP to yield O-methylsterigmatocystin (OMST) and dihydro-O-methylsterigmatocystin (DHOMST), respectively. Finally OMST is converted to aflatoxins B1 and G1, and DHOMST to aflatoxins B2 and G2, via the action of several enzymes including O-methylsterigmatocystin oxidoreductase aflQ, the cytochrome P450 monooxygenase aflU, but also the NADH-dependent flavin oxidoreductase nadA which is specifically required for the synthesis of AFG1. The chain is Fatty acid synthase alpha subunit aflA from Aspergillus parasiticus (strain ATCC 56775 / NRRL 5862 / SRRC 143 / SU-1).